We begin with the raw amino-acid sequence, 319 residues long: N-acyl-aromatic-L-amino acid amidohydrolase (carboxylate-forming) (319 aa).

The interval 1-210 (MCSLPVPREP…TVLDFIELFN (210 aa)) is hydrolytic domain. Residues H21 and E24 each coordinate Zn(2+). Substrate is bound by residues R63 and 70–71 (NR). Zn(2+) is bound at residue H116. Substrate contacts are provided by E178 and Y288. The shielding domain stretch occupies residues 211–318 (QGTAFPAFEM…PALTPAPSPA (108 aa)).

The protein belongs to the AspA/AstE family. Aspartoacylase subfamily. In terms of assembly, exists as a mixture of homodimers and homotetramer, both catalytically active. As to quaternary structure, (Microbial infection) Interacts with hepatitis C virus/HCV core protein. It depends on Zn(2+) as a cofactor.

The protein resides in the apical cell membrane. Its subcellular location is the cytoplasm. The catalysed reaction is an N-acyl-aromatic L-alpha-amino acid + H2O = an aromatic L-alpha-amino acid + a carboxylate. It carries out the reaction an N-acetyl-L-cysteine-S-conjugate + H2O = an S-substituted L-cysteine + acetate. Plays an important role in deacetylating mercapturic acids in kidney proximal tubules. Also acts on N-acetyl-aromatic amino acids. In Homo sapiens (Human), this protein is N-acyl-aromatic-L-amino acid amidohydrolase (carboxylate-forming) (ACY3).